Reading from the N-terminus, the 174-residue chain is RNA pyrophosphohydrolase (174 aa).

Positions 6–149 (GFRANVGIII…KRDVYRKVMK (144 aa)) constitute a Nudix hydrolase domain. Residues 38–59 (GGVDDGESAEEAMYRELYEEVG) carry the Nudix box motif.

Belongs to the Nudix hydrolase family. RppH subfamily. A divalent metal cation is required as a cofactor.

Its function is as follows. Accelerates the degradation of transcripts by removing pyrophosphate from the 5'-end of triphosphorylated RNA, leading to a more labile monophosphorylated state that can stimulate subsequent ribonuclease cleavage. This Shewanella oneidensis (strain ATCC 700550 / JCM 31522 / CIP 106686 / LMG 19005 / NCIMB 14063 / MR-1) protein is RNA pyrophosphohydrolase.